Consider the following 100-residue polypeptide: Urease subunit gamma (100 aa).

Belongs to the urease gamma subunit family. As to quaternary structure, heterotrimer of UreA (gamma), UreB (beta) and UreC (alpha) subunits. Three heterotrimers associate to form the active enzyme.

The protein resides in the cytoplasm. It catalyses the reaction urea + 2 H2O + H(+) = hydrogencarbonate + 2 NH4(+). It participates in nitrogen metabolism; urea degradation; CO(2) and NH(3) from urea (urease route): step 1/1. This chain is Urease subunit gamma, found in Rhodopseudomonas palustris (strain BisA53).